The primary structure comprises 594 residues: Neopentalenolactone D synthase (594 aa).

FAD contacts are provided by residues 64 to 65 (IG), 86 to 87 (DK), 94 to 95 (TW), 106 to 107 (DV), Tyr112, Val156, and Met494.

This sequence belongs to the FAD-binding monooxygenase family. The cofactor is FAD.

The enzyme catalyses 1-deoxy-11-oxopentalenate + NADPH + O2 + H(+) = neopentalenolactone D + NADP(+) + H2O. The protein operates within antibiotic biosynthesis; neopentalenolactone biosynthesis. Catalyzes the flavin-dependent Baeyer-Villiger oxidation of 1-deoxy-11-oxopentalenic acid to neopentalenolactone D in the biosynthesis of neopentalenolactone antibiotic. The sequence is that of Neopentalenolactone D synthase (ptlE) from Streptomyces avermitilis (strain ATCC 31267 / DSM 46492 / JCM 5070 / NBRC 14893 / NCIMB 12804 / NRRL 8165 / MA-4680).